Consider the following 322-residue polypeptide: Quinolinate synthase (322 aa).

The iminosuccinate site is built by H37 and S54. C99 contributes to the [4Fe-4S] cluster binding site. Iminosuccinate contacts are provided by residues 125-127 (YIN) and S142. C185 is a binding site for [4Fe-4S] cluster. Iminosuccinate-binding positions include 211 to 213 (HPE) and T228. C278 is a [4Fe-4S] cluster binding site.

This sequence belongs to the quinolinate synthase family. Type 2 subfamily. Requires [4Fe-4S] cluster as cofactor.

Its subcellular location is the cytoplasm. It catalyses the reaction iminosuccinate + dihydroxyacetone phosphate = quinolinate + phosphate + 2 H2O + H(+). Its pathway is cofactor biosynthesis; NAD(+) biosynthesis; quinolinate from iminoaspartate: step 1/1. Functionally, catalyzes the condensation of iminoaspartate with dihydroxyacetone phosphate to form quinolinate. In Chlorobaculum parvum (strain DSM 263 / NCIMB 8327) (Chlorobium vibrioforme subsp. thiosulfatophilum), this protein is Quinolinate synthase.